Reading from the N-terminus, the 332-residue chain is uncharacterized protein (332 aa).

Belongs to the peptidase U32 family.

This is an uncharacterized protein from Methanocaldococcus jannaschii (strain ATCC 43067 / DSM 2661 / JAL-1 / JCM 10045 / NBRC 100440) (Methanococcus jannaschii).